The sequence spans 411 residues: Imidazolonepropionase (411 aa).

Fe(3+) contacts are provided by His-75 and His-77. 2 residues coordinate Zn(2+): His-75 and His-77. The 4-imidazolone-5-propanoate site is built by Arg-84, Tyr-147, and His-180. An N-formimidoyl-L-glutamate-binding site is contributed by Tyr-147. His-245 contributes to the Fe(3+) binding site. His-245 serves as a coordination point for Zn(2+). Residue Gln-248 coordinates 4-imidazolone-5-propanoate. Fe(3+) is bound at residue Asp-320. Zn(2+) is bound at residue Asp-320. N-formimidoyl-L-glutamate-binding residues include Asn-322 and Gly-324. Residue Thr-325 coordinates 4-imidazolone-5-propanoate.

The protein belongs to the metallo-dependent hydrolases superfamily. HutI family. Zn(2+) serves as cofactor. Requires Fe(3+) as cofactor.

It is found in the cytoplasm. It catalyses the reaction 4-imidazolone-5-propanoate + H2O = N-formimidoyl-L-glutamate. Its pathway is amino-acid degradation; L-histidine degradation into L-glutamate; N-formimidoyl-L-glutamate from L-histidine: step 3/3. Functionally, catalyzes the hydrolytic cleavage of the carbon-nitrogen bond in imidazolone-5-propanoate to yield N-formimidoyl-L-glutamate. It is the third step in the universal histidine degradation pathway. In Photobacterium profundum (strain SS9), this protein is Imidazolonepropionase.